The chain runs to 465 residues: Branched-chain amino acid permease BcaP (465 aa).

13 helical membrane-spanning segments follow: residues 35–55, 57–77, 103–123, 133–153, 159–179, 188–208, 216–236, 258–278, 305–325, 355–375, 380–400, 413–432, and 437–456; these read LLGI…TGAV, AGPG…FAAL, LMAF…VSAV, SFLS…PGAV, LFNL…YLGI, IMVI…AVYV, FMPM…FAFI, GIIF…AIMT, VAGI…LVML, PYVA…LVPL, KLVN…VIVL, CPGV…FLIL, and VTIV…YFLY.

This sequence belongs to the amino acid-polyamine-organocation (APC) superfamily.

It localises to the cell membrane. Isoleucine uptake is efficiently reduced in the presence of 100-fold excess valine, leucine, alanine, threonine, serine, cysteine, asparagine, and a nonproteinaceous amino acid 4-azaleucine. In terms of biological role, branched-chain amino acid transport system which is involved in the uptake of isoleucine, valine and probably leucine. Can also transport threonine, and is active as a minor serine permease. May be an amino acid permease of rather broad specificity, because several amino acids, albeit at 100-fold excess, are able to prevent isoleucine uptake. Probably does not transport methionine. Together with BraB and BrnQ, plays an important role in the activation of CodY, a branched-chain amino acid-responsive transcriptional regulator that controls the expression of several dozen transcription units in B.subtilis. The chain is Branched-chain amino acid permease BcaP from Bacillus subtilis (strain 168).